Here is a 311-residue protein sequence, read N- to C-terminus: L-lactate dehydrogenase 2 (311 aa).

3 residues coordinate NAD(+): V14, D35, and R40. Substrate is bound at residue R90. NAD(+) is bound by residues S103, 120–122 (ATN), and T145. 122 to 125 (NPCD) provides a ligand contact to substrate. Residue 150–153 (DTTR) coordinates substrate. Residue H177 is the Proton acceptor of the active site. T230 serves as a coordination point for substrate.

This sequence belongs to the LDH/MDH superfamily. LDH family. Homotetramer.

It is found in the cytoplasm. It carries out the reaction (S)-lactate + NAD(+) = pyruvate + NADH + H(+). It participates in fermentation; pyruvate fermentation to lactate; (S)-lactate from pyruvate: step 1/1. In terms of biological role, catalyzes the conversion of lactate to pyruvate. This is L-lactate dehydrogenase 2 from Listeria innocua serovar 6a (strain ATCC BAA-680 / CLIP 11262).